The following is a 436-amino-acid chain: ATP-dependent RNA helicase RhlB (436 aa).

The Q motif motif lies at 9–37 (QKFADLDLLPQVIEGLEKKGFDYCTPIQA). A Helicase ATP-binding domain is found at 40–219 (LPVLLTGQDI…FEHMHNPEHV (180 aa)). An ATP-binding site is contributed by 53–60 (AQTGTGKT). The short motif at 165–168 (DEAD) is the DEAD box element. Residues 245–390 (ALLQTLIEEE…MSDYDASALL (146 aa)) form the Helicase C-terminal domain. Positions 398-436 (RLRTRNPQQRRSNNNGPRNGNRKPNQNRRPRQPRHNKEA) are disordered. Over residues 402–421 (RNPQQRRSNNNGPRNGNRKP) the composition is skewed to low complexity. Residues 422–436 (NQNRRPRQPRHNKEA) are compositionally biased toward basic residues.

Belongs to the DEAD box helicase family. RhlB subfamily. Component of the RNA degradosome, which is a multiprotein complex involved in RNA processing and mRNA degradation.

The protein localises to the cytoplasm. It catalyses the reaction ATP + H2O = ADP + phosphate + H(+). DEAD-box RNA helicase involved in RNA degradation. Has RNA-dependent ATPase activity and unwinds double-stranded RNA. The chain is ATP-dependent RNA helicase RhlB from Vibrio atlanticus (strain LGP32) (Vibrio splendidus (strain Mel32)).